Here is a 197-residue protein sequence, read N- to C-terminus: NADH-quinone oxidoreductase subunit B (197 aa).

Residues C76, C77, C141, and C171 each coordinate [4Fe-4S] cluster.

This sequence belongs to the complex I 20 kDa subunit family. As to quaternary structure, NDH-1 is composed of 14 different subunits. Subunits NuoB, C, D, E, F, and G constitute the peripheral sector of the complex. The cofactor is [4Fe-4S] cluster.

Its subcellular location is the cell inner membrane. It catalyses the reaction a quinone + NADH + 5 H(+)(in) = a quinol + NAD(+) + 4 H(+)(out). NDH-1 shuttles electrons from NADH, via FMN and iron-sulfur (Fe-S) centers, to quinones in the respiratory chain. The immediate electron acceptor for the enzyme in this species is believed to be ubiquinone. Couples the redox reaction to proton translocation (for every two electrons transferred, four hydrogen ions are translocated across the cytoplasmic membrane), and thus conserves the redox energy in a proton gradient. In Methylobacterium nodulans (strain LMG 21967 / CNCM I-2342 / ORS 2060), this protein is NADH-quinone oxidoreductase subunit B.